Here is a 120-residue protein sequence, read N- to C-terminus: Testis-expressed protein 48 (120 aa).

The segment covering 29-45 (KVPSQTQEHKPSTQNLL) has biased composition (polar residues). Residues 29–86 (KVPSQTQEHKPSTQNLLLQKDELDRQNPKRINAVSHLPSRTPLIQTKKSTSSSSSEFE) form a disordered region. The span at 74–83 (TKKSTSSSSS) shows a compositional bias: low complexity.

This chain is Testis-expressed protein 48, found in Homo sapiens (Human).